The following is a 273-amino-acid chain: ATP synthase subunit a (273 aa).

Transmembrane regions (helical) follow at residues 42-62 (TLNIDSLFFSVVLGALFLFIF), 102-122 (VIAPLALTVFVWVFLMNMMDL), 148-168 (DVSITLSMALGVFILILFYSI), 213-233 (LFGNMYAGELIFILIAGLLPW), and 244-264 (AIFHILIITLQAFIFMVLTIV).

Belongs to the ATPase A chain family. In terms of assembly, F-type ATPases have 2 components, CF(1) - the catalytic core - and CF(0) - the membrane proton channel. CF(1) has five subunits: alpha(3), beta(3), gamma(1), delta(1), epsilon(1). CF(0) has three main subunits: a(1), b(2) and c(9-12). The alpha and beta chains form an alternating ring which encloses part of the gamma chain. CF(1) is attached to CF(0) by a central stalk formed by the gamma and epsilon chains, while a peripheral stalk is formed by the delta and b chains.

Its subcellular location is the cell inner membrane. In terms of biological role, key component of the proton channel; it plays a direct role in the translocation of protons across the membrane. The protein is ATP synthase subunit a of Serratia proteamaculans (strain 568).